A 311-amino-acid polypeptide reads, in one-letter code: T-cell immunomodulatory protein (311 aa).

N-linked (GlcNAc...) asparagine glycans are attached at residues N52, N70, and N181. Residues 266–286 (VLLTAIALIGVCVFILAIIGI) form a helical membrane-spanning segment.

This sequence belongs to the TIP family. In terms of assembly, interacts with RUVBL1, RUVBL2 and alpha-tubulin.

The protein localises to the secreted. It localises to the cell membrane. Its function is as follows. Modulator of T-cell function. Has a protective effect in graft versus host disease model. The chain is T-cell immunomodulatory protein from Macaca fascicularis (Crab-eating macaque).